The primary structure comprises 155 residues: Microsomal glutathione S-transferase 1 (155 aa).

Residues 3 to 9 (DLTQVMD) are Lumenal-facing. A helical membrane pass occupies residues 10–33 (DEVFMAFASYATIILSKMMLMSTA). The Cytoplasmic segment spans residues 34–62 (TAFYRLTRKVFANPEDCVAFGKGENAKKY). Residue Arg38 coordinates glutathione. N6-acetyllysine is present on residues Lys42, Lys55, and Lys60. The chain crosses the membrane as a helical span at residues 63 to 96 (LRTDDRVERVRRAHLNDLENIIPFLGIGLLYSLS). 4 residues coordinate glutathione: Arg73, Arg74, His76, and Glu81. Topologically, residues 97-99 (GPD) are lumenal. Residues 100–123 (PSTAILHFRLFVGARIYHTIAYLT) traverse the membrane as a helical segment. Tyr121 provides a ligand contact to glutathione. Topologically, residues 124 to 128 (PLPQP) are cytoplasmic. A helical membrane pass occupies residues 129–148 (NRALSFFVGYGVTLSMAYRL). Residues 149 to 155 (LKSKLYL) lie on the Lumenal side of the membrane.

The protein belongs to the MAPEG family. As to quaternary structure, homotrimer; The trimer binds only one molecule of glutathione. As to expression, highly expressed in liver.

The protein localises to the endoplasmic reticulum membrane. Its subcellular location is the mitochondrion outer membrane. It catalyses the reaction RX + glutathione = an S-substituted glutathione + a halide anion + H(+). In terms of biological role, conjugation of reduced glutathione to a wide number of exogenous and endogenous hydrophobic electrophiles. In Homo sapiens (Human), this protein is Microsomal glutathione S-transferase 1 (MGST1).